The following is a 242-amino-acid chain: Biosynthetic peptidoglycan transglycosylase (242 aa).

Residues 19–39 traverse the membrane as a helical segment; sequence ILAALAVFWGGGIALFSVVPV.

Belongs to the glycosyltransferase 51 family.

It is found in the cell inner membrane. The enzyme catalyses [GlcNAc-(1-&gt;4)-Mur2Ac(oyl-L-Ala-gamma-D-Glu-L-Lys-D-Ala-D-Ala)](n)-di-trans,octa-cis-undecaprenyl diphosphate + beta-D-GlcNAc-(1-&gt;4)-Mur2Ac(oyl-L-Ala-gamma-D-Glu-L-Lys-D-Ala-D-Ala)-di-trans,octa-cis-undecaprenyl diphosphate = [GlcNAc-(1-&gt;4)-Mur2Ac(oyl-L-Ala-gamma-D-Glu-L-Lys-D-Ala-D-Ala)](n+1)-di-trans,octa-cis-undecaprenyl diphosphate + di-trans,octa-cis-undecaprenyl diphosphate + H(+). Its pathway is cell wall biogenesis; peptidoglycan biosynthesis. Peptidoglycan polymerase that catalyzes glycan chain elongation from lipid-linked precursors. The sequence is that of Biosynthetic peptidoglycan transglycosylase from Salmonella paratyphi B (strain ATCC BAA-1250 / SPB7).